Consider the following 278-residue polypeptide: Orotidine 5'-phosphate decarboxylase (278 aa).

Substrate-binding positions include D40, 62-64 (KTH), 93-102 (DRKFIDIGNT), Y228, and R246. The Proton donor role is filled by K95.

This sequence belongs to the OMP decarboxylase family.

The enzyme catalyses orotidine 5'-phosphate + H(+) = UMP + CO2. The protein operates within pyrimidine metabolism; UMP biosynthesis via de novo pathway; UMP from orotate: step 2/2. The sequence is that of Orotidine 5'-phosphate decarboxylase (PYR1) from Passalora fulva (Tomato leaf mold).